We begin with the raw amino-acid sequence, 133 residues long: Large ribosomal subunit protein uL15 (133 aa).

Residues 1 to 64 are disordered; that stretch reads MGLENLKPAK…QPLQRRLPKI (64 aa).

It belongs to the universal ribosomal protein uL15 family. In terms of assembly, part of the 50S ribosomal subunit.

Binds to the 23S rRNA. This chain is Large ribosomal subunit protein uL15, found in Helicobacter pylori (strain Shi470).